We begin with the raw amino-acid sequence, 154 residues long: OCIA domain-containing protein 2 (154 aa).

An OCIA domain is found at 1-120 (MASVSTHGNQ…HSFEDQLRGA (120 aa)). Lysine 41 is modified (N6-acetyllysine).

Interacts (via OCIA domain) with OCIAD1/ASRIJ and STAT3. Abundant in kidney, liver and brain.

The protein resides in the endosome. It is found in the mitochondrion. The protein localises to the mitochondrion inner membrane. Its function is as follows. Has an essential role in the assembly of mitochondrial respiratory chain complex III. Is also required for STAT3 activation and plays a role in cell migration. This chain is OCIA domain-containing protein 2 (Ociad2), found in Mus musculus (Mouse).